Here is a 327-residue protein sequence, read N- to C-terminus: Serine/threonine-protein phosphatase PP2A catalytic subunit (327 aa).

Mn(2+) is bound by residues Asp-75, His-77, Asp-103, and Asn-135. His-136 serves as the catalytic Proton donor. Residues His-185 and His-259 each contribute to the Mn(2+) site. Leu-327 is subject to Leucine methyl ester.

Belongs to the PPP phosphatase family. PP-2A subfamily. It depends on Mn(2+) as a cofactor.

It carries out the reaction O-phospho-L-seryl-[protein] + H2O = L-seryl-[protein] + phosphate. The catalysed reaction is O-phospho-L-threonyl-[protein] + H2O = L-threonyl-[protein] + phosphate. This Neurospora crassa (strain ATCC 24698 / 74-OR23-1A / CBS 708.71 / DSM 1257 / FGSC 987) protein is Serine/threonine-protein phosphatase PP2A catalytic subunit (pph-1).